A 346-amino-acid polypeptide reads, in one-letter code: Enkurin domain-containing protein 1 (346 aa).

3 disordered regions span residues 1-24 (MCEG…DYYR), 88-107 (SGVS…NLRR), and 113-132 (RRFQ…PLKA). Residue Ser91 is modified to Phosphoserine. 2 stretches are compositionally biased toward basic and acidic residues: residues 98-107 (KDHEKENLRR) and 113-125 (RRFQ…REQG). A Phosphoserine modification is found at Ser136. In terms of domain architecture, Enkurin spans 251 to 343 (ERRDLWRKEA…IFSRPKVFVK (93 aa)). Residues 259 to 280 (EAEARQRSQPDPSMPPGHTLMP) form a disordered region.

Interacts with alpha-tubulin. Interacts (via central region) with CCP110 (via N-terminal region); competes with CEP97 for binding to CCP110. Widely expressed with highest levels in testis and lung.

Its subcellular location is the cytoplasm. It is found in the cytoskeleton. It localises to the microtubule organizing center. The protein resides in the centrosome. The protein localises to the centriole. Its subcellular location is the cilium basal body. It is found in the cell projection. It localises to the cilium. The protein resides in the spindle. The protein localises to the spindle pole. Its subcellular location is the cilium axoneme. Functionally, microtubule-binding protein which regulates microtubule organization and stability. Promotes the stability of astral microtubules and facilitates the proper orientation of the mitotic spindle. This allows the oriented division of basal keratinocytes and contributes to epidermal stratification. Required for the assembly of both primary and motile cilia. Destabilizes the interaction between CCP110 and CEP97 by competing with CEP97 for binding to CCP110 which promotes the removal of CCP110 and CEP97 from the mother centriole and allows the initiation of ciliogenesis. This chain is Enkurin domain-containing protein 1 (Enkd1), found in Mus musculus (Mouse).